We begin with the raw amino-acid sequence, 935 residues long: Formin-I (935 aa).

Positions 35–76 form a coiled coil; that stretch reads QQQQQQQQQQINNENENSINNQENKENNNKDNNNNNNKEIKQ. 3 disordered regions span residues 52 to 78, 380 to 511, and 561 to 590; these read SINNQENKENNNKDNNNNNNKEIKQSS, LSSA…QLTP, and KEKMSKENLNNSNNNNNNNSNNNGEEQSLS. Positions 384-407 are enriched in low complexity; sequence KKQPQQQPQKDVTSSSSSSSNSSS. Over residues 418 to 428 the composition is skewed to polar residues; that stretch reads ITTNDSSSSNP. Residues 431-443 are compositionally biased toward basic and acidic residues; the sequence is DFDKLSLSSDDKV. The span at 444–454 shows a compositional bias: polar residues; the sequence is NNNNVQIENTT. Residues 444-505 form the FH1 domain; sequence NNNNVQIENT…KPNNSGGGGG (62 aa). The span at 456 to 482 shows a compositional bias: pro residues; sequence SVPPPPPVGAPPPPPPPPPPPPPPPPS. The span at 484–499 shows a compositional bias: polar residues; it reads LKLNRNRISTPKKPNN. Positions 506–935 constitute an FH2 domain; sequence GGQLTPLQKK…SLNLSTLNSK (430 aa). The segment covering 568-583 has biased composition (low complexity); sequence NLNNSNNNNNNNSNNN. 2 coiled-coil regions span residues 702–730 and 803–834; these read SLLDSIEINNNQLSKAIEQLRNSRKFIKV and QSSLENILEESNEIENKFKQVDQEIQYHQQLL.

This sequence belongs to the formin homology family. Diaphanous subfamily.

Its function is as follows. Formins play an important role in the nucleation of actin and the formation of linear actin filaments. The polypeptide is Formin-I (forI) (Dictyostelium discoideum (Social amoeba)).